A 512-amino-acid polypeptide reads, in one-letter code: Histidine ammonia-lyase (512 aa).

The segment at residues 143-145 (ASG) is a cross-link (5-imidazolinone (Ala-Gly)). Ser144 carries the post-translational modification 2,3-didehydroalanine (Ser).

This sequence belongs to the PAL/histidase family. In terms of processing, contains an active site 4-methylidene-imidazol-5-one (MIO), which is formed autocatalytically by cyclization and dehydration of residues Ala-Ser-Gly.

The protein localises to the cytoplasm. It carries out the reaction L-histidine = trans-urocanate + NH4(+). It functions in the pathway amino-acid degradation; L-histidine degradation into L-glutamate; N-formimidoyl-L-glutamate from L-histidine: step 1/3. The polypeptide is Histidine ammonia-lyase (Ruegeria pomeroyi (strain ATCC 700808 / DSM 15171 / DSS-3) (Silicibacter pomeroyi)).